We begin with the raw amino-acid sequence, 264 residues long: Small ribosomal subunit protein eS1B (264 aa).

A disordered region spans residues 233 to 264 (GEGGGSGKPAADETGAKVERADGYEPPVQESV). Residues 242–255 (AADETGAKVERADG) are compositionally biased toward basic and acidic residues.

It belongs to the eukaryotic ribosomal protein eS1 family. As to quaternary structure, component of the small ribosomal subunit. Mature ribosomes consist of a small (40S) and a large (60S) subunit. The 40S subunit contains about 33 different proteins and 1 molecule of RNA (18S). The 60S subunit contains about 49 different proteins and 3 molecules of RNA (28S, 5.8S and 5S). Part of the small subunit (SSU) processome, composed of more than 70 proteins and the RNA chaperone small nucleolar RNA (snoRNA) U3.

It localises to the cytoplasm. The protein localises to the nucleus. It is found in the nucleolus. In terms of biological role, component of the small ribosomal subunit. The ribosome is a large ribonucleoprotein complex responsible for the synthesis of proteins in the cell. Part of the small subunit (SSU) processome, first precursor of the small eukaryotic ribosomal subunit. During the assembly of the SSU processome in the nucleolus, many ribosome biogenesis factors, an RNA chaperone and ribosomal proteins associate with the nascent pre-rRNA and work in concert to generate RNA folding, modifications, rearrangements and cleavage as well as targeted degradation of pre-ribosomal RNA by the RNA exosome. May play a role during erythropoiesis. This is Small ribosomal subunit protein eS1B (rps3a-b) from Xenopus laevis (African clawed frog).